The chain runs to 162 residues: MKKISSVFTMFALIAAILFSGFIPQQAYAETPLTQTATNETATIQLTSDVHTLAVINTFDGVADYLIRYKRLPDNYITKSQASALGWVASKGNLAEVAPGKSIGGDVFSNREGRLPSASGRTWREADINYVSGFRNADRLVYSSDWLIYKTTDHYATFTRIR.

The N-terminal stretch at 1–29 (MKKISSVFTMFALIAAILFSGFIPQQAYA) is a signal peptide. Residues 30-53 (ETPLTQTATNETATIQLTSDVHTL) constitute a propeptide that is removed on maturation. The active-site Proton acceptor is Glu125. Residue His154 is the Proton donor of the active site.

This sequence belongs to the ribonuclease N1/T1 family.

It is found in the secreted. Its function is as follows. This is a purine-specific ribonuclease. The protein is Ribonuclease of Bacillus intermedius.